We begin with the raw amino-acid sequence, 240 residues long: Arylmalonate decarboxylase (240 aa).

It carries out the reaction 2-aryl-2-methylmalonate + H(+) = 2-arylpropionate + CO2. This is Arylmalonate decarboxylase from Bordetella bronchiseptica (Alcaligenes bronchisepticus).